Here is a 1314-residue protein sequence, read N- to C-terminus: Synergin gamma (1314 aa).

Residues 115–155 are a coiled coil; the sequence is MQKQFAEEQQKRFEQQQKLLEEERKRRQFEEQKQKLRLLSS. The interval 178–199 is disordered; it reads GFSRDAKMHPTPASHPKKPGPS. The EH domain maps to 295 to 388; sequence NESLVPDAYK…QFPAAPIPTL (94 aa). Residues 457-461 carry the DFXDF motif 1 motif; it reads DFQDF. Positions 460 to 498 are disordered; the sequence is DFQDASKSGSLDDSFSDFQELPASSKTSNSQHGNSAPSL. Residues 462–496 are compositionally biased toward polar residues; that stretch reads QDASKSGSLDDSFSDFQELPASSKTSNSQHGNSAP. Ser-473 carries the phosphoserine modification. Lys-513 carries the N6-acetyllysine modification. Residues 518–786 are interaction with AP1G1; it reads KGIAADKSSE…ADFHSSKFSS (269 aa). A Phosphoserine modification is found at Ser-580. The tract at residues 666-678 is interaction with AP1G1, AP1G2 and GGA1; that stretch reads LADDFGEFSLFGE. Positions 690–694 match the DFXDF motif 2 motif; that stretch reads DFADF. Phosphoserine is present on Ser-720. N6-acetyllysine is present on Lys-744. Residues Ser-752 and Ser-772 each carry the phosphoserine modification. The DFXDF motif 3 motif lies at 775–779; the sequence is DFADF. 6 positions are modified to phosphoserine: Ser-812, Ser-852, Ser-855, Ser-909, Ser-919, and Ser-935. 2 disordered regions span residues 972–1026 and 1073–1102; these read PQTS…DFGE and SLSL…NTLN. The segment covering 976–990 has biased composition (basic and acidic residues); the sequence is EQKEYENRDYKDFTK. Polar residues predominate over residues 1001–1019; sequence EATCPSPASSGASQETPNE. 5 positions are modified to phosphoserine: Ser-1006, Ser-1073, Ser-1075, Ser-1087, and Ser-1098. Thr-1100 is subject to Phosphothreonine.

Self-associates. Interacts with GGA1 (via GAE domain). Interacts with GGA2 and GGA3. Interacts with AP1G1 (via GAE domain), a subunit of adapter protein complex AP-1. Interacts with AP1G2 (via GAE domain) a subunit of adapter protein complex AP-1. Component of the aftiphilin/p200/gamma-synergin complex, at least composed of AFTPH/aftiphilin, HEATR5B/p200a and SYNRG/gamma-synergin, which plays a role in the AP1G1/AP-1-mediated trafficking of transferrin from early to recycling endosomes. Within the complex interacts with AFTPH/aftiphilin and HEATR5B/p200a; the interactions are direct. Interacts (via EH domain) with SCAMP1.

It localises to the cytoplasm. The protein localises to the golgi apparatus. Its subcellular location is the trans-Golgi network membrane. It is found in the perinuclear region. The protein resides in the cytoplasmic vesicle. It localises to the clathrin-coated vesicle. Plays a role in endocytosis and/or membrane trafficking at the trans-Golgi network (TGN). May act by linking the adapter protein complex AP-1 to other proteins. Component of clathrin-coated vesicles. Component of the aftiphilin/p200/gamma-synergin complex, which plays roles in AP1G1/AP-1-mediated protein trafficking including the trafficking of transferrin from early to recycling endosomes, and the membrane trafficking of furin and the lysosomal enzyme cathepsin D between the trans-Golgi network (TGN) and endosomes. The protein is Synergin gamma of Homo sapiens (Human).